The chain runs to 390 residues: Serpin B4 (390 aa).

At methionine 1 the chain carries N-acetylmethionine.

Belongs to the serpin family. Ov-serpin subfamily. In terms of tissue distribution, squamous cells.

Its subcellular location is the cytoplasm. Functionally, may act as a protease inhibitor to modulate the host immune response against tumor cells. This chain is Serpin B4 (SERPINB4), found in Homo sapiens (Human).